The sequence spans 117 residues: Large ribosomal subunit protein uL18 (117 aa).

The protein belongs to the universal ribosomal protein uL18 family. In terms of assembly, part of the 50S ribosomal subunit; part of the 5S rRNA/L5/L18/L25 subcomplex. Contacts the 5S and 23S rRNAs.

In terms of biological role, this is one of the proteins that bind and probably mediate the attachment of the 5S RNA into the large ribosomal subunit, where it forms part of the central protuberance. This is Large ribosomal subunit protein uL18 from Sphingopyxis alaskensis (strain DSM 13593 / LMG 18877 / RB2256) (Sphingomonas alaskensis).